A 460-amino-acid chain; its full sequence is V-type ATP synthase beta chain (460 aa).

Belongs to the ATPase alpha/beta chains family.

Its function is as follows. Produces ATP from ADP in the presence of a proton gradient across the membrane. The V-type beta chain is a regulatory subunit. The protein is V-type ATP synthase beta chain of Thermotoga neapolitana (strain ATCC 49049 / DSM 4359 / NBRC 107923 / NS-E).